Reading from the N-terminus, the 104-residue chain is Flagellar hook-basal body complex protein FliE (104 aa).

It belongs to the FliE family.

It is found in the bacterial flagellum basal body. The chain is Flagellar hook-basal body complex protein FliE from Salmonella newport (strain SL254).